Reading from the N-terminus, the 77-residue chain is Putative antitoxin VapB3 (77 aa).

It belongs to the UPF0330 family.

Functionally, possibly the antitoxin component of a type II toxin-antitoxin (TA) system. Its cognate toxin is VapC3 (Potential). In Methanocaldococcus jannaschii (strain ATCC 43067 / DSM 2661 / JAL-1 / JCM 10045 / NBRC 100440) (Methanococcus jannaschii), this protein is Putative antitoxin VapB3 (vapB3).